Consider the following 372-residue polypeptide: MDRLLQPPSSHSIAPSKFQSRPSPLLLHRLHSTNLSTFPSSRRLESRRISSISCFFRQNPSPDTSPGLNQSSNFLIASSQTDASKPNPGFIQRIVSSFEQRKTISAGMVILVSAIAALLLNPILVPPAFASFQTATNSGGAAVVGGKLLRTEVLTSAWTGFFAGCLHTLSGPDHLAALAPLSIGRTRMESAAVGALWGCGHDAGQLIFGLLFLLLKDRLHIEVIRTWGTRVVGLTLLVIGAMGIKEASEMPEPCVVTLENGETDEKSLKKKKIGFATFATGIVHGLQPDALMMVLPALALPSRIAGASFLIMFLIGTVIAMGSYTVFIGSCSEALKEKVPRITEKLTWASSLVAIGLGLAIIVSQFFGFSLY.

Positions 1-20 are disordered; that stretch reads MDRLLQPPSSHSIAPSKFQS. A chloroplast-targeting transit peptide spans 1–78; that stretch reads MDRLLQPPSS…NQSSNFLIAS (78 aa). Residues 7 to 20 are compositionally biased toward polar residues; sequence PPSSHSIAPSKFQS. 7 helical membrane passes run 109–129, 161–181, 195–215, 231–251, 281–301, 309–329, and 352–372; these read VILVSAIAALLLNPILVPPAF, FFAGCLHTLSGPDHLAALAPL, ALWGCGHDAGQLIFGLLFLLL, VVGLTLLVIGAMGIKEASEMP, GIVHGLQPDALMMVLPALALP, FLIMFLIGTVIAMGSYTVFIG, and LVAIGLGLAIIVSQFFGFSLY.

Mostly expressed in leaves, stems and flowers, to a lower extent, in roots, floral bud, inflorescence and siliques, and, barely, in seedlings.

Its subcellular location is the plastid. The protein resides in the chloroplast membrane. It localises to the plastid membrane. In terms of biological role, together with CGF1, essential protein which supports female gametogenesis and embryogenesis, probably by securing local energy supply. This is Chloroplast protein FOR GROWTH AND FERTILITY 2 from Arabidopsis thaliana (Mouse-ear cress).